The chain runs to 316 residues: Ribosomal protein L11 methyltransferase (316 aa).

S-adenosyl-L-methionine contacts are provided by T157, G178, D200, and N243.

It belongs to the methyltransferase superfamily. PrmA family.

It is found in the cytoplasm. The enzyme catalyses L-lysyl-[protein] + 3 S-adenosyl-L-methionine = N(6),N(6),N(6)-trimethyl-L-lysyl-[protein] + 3 S-adenosyl-L-homocysteine + 3 H(+). Functionally, methylates ribosomal protein L11. The protein is Ribosomal protein L11 methyltransferase of Streptococcus pneumoniae (strain JJA).